Here is a 5101-residue protein sequence, read N- to C-terminus: MSRFSCIFPTLTDGYVPNPDHTRAAGRRTYRIDLSGWKAPGSETESLILAAWGLVLSSYVGTDEVAFYVVPTTGPDTTALAELKVEGDMPRQSLTYAAHQLLHPGLVGAGQVSGETANTIITFANDIESLFVTQTEESFLSLHVYRDEQGHISLSLTYYLSLLTDAQAANVGTAMAQALAEVGTCDNDKLVKDLSLMSPAHLEHIWRFNADVPGIWEECFHDVIERHAANRPHSLAVDAWDTELTYTDLVREARLLAAYLQRRGVGPGSVVPISFERSGAALVAMLAVSKAGGAFVSVPPNLPAGRVDAILEVIEAPFVVTWTKYESFWAERLPTLPIDNYPKPAADATVEALGKPEDLFYVIFTSGSTGRPKGCMLSHTNWLNGALRNAPSWKYGPESRVLQMLSHTFDMSLLEICTSLGSGSCVCVPRPEEIETSISDAINRWQVNHVIMTPSLARALRPDDVPGLKTMCLGGEAFPKEIVTMWSERINLWQFYGPSECSINSSSWPITRPDADPLNIGPPNSAACWVVDVHDYNKLVPVGAIGELLVSGPIVGMGYLKNPVKTAEAFLEEVGFVAKDDPQFGGFRFYRTGDLVRWNSDGTITFCGRADTQVKLNGQRLELAEVEYQLGLEAGVQYAIAMAPQAGLCKNNLIAILTVKGTSTGTQDTAADEIPLLDRRDPIVQETVKKLRSQLQHALPRYMVPTIWAFVGRMPMSASGKIDRVKLRDWVQRMSQETFDAITGRSLEAEEHAFGLSRLEQKIQLAWAEALGLSAAEVGLQQPFVALGGDSIKALDAVARCRARQIKISMVHILSCEGVREAASLAEVQETPAQQVAEMAVDYSNLWTRLSNDYDLDKLGVTQVEEVEDVFPCTTMQEGMFLGQIRRPGAYHMRFFHRVQLKGGCLPTVERIQQAWASLVERHPSLRTVFVDDLSPEAIYHSIVLRSVPMEVRMREVPRDLSAEAALAIFTEELVPFRANAPLHRMLLLTCRGRVPYLMLEISHVIMDGYALSVFRREFIRACSSSAPLPRGPDYRMFANYHRTRQTDDSARYWTDYLADCVPCHIPTHAVSAPSDGPPEWPRTLQRRDFGFENSAAFLQRCKERQVTLACAIRAAWALVLRAYTQSEDVCFGYVSSGRNVPVPEVETIFGLCLSMQVCRARLSEASTIASLARKIQEDYVASLPFQHYPLAEAQRGLKQTHGQGLFNTAISMEWVPPSAEDEDALLDLEEIREQDDPTEYDIAISVDVHEGHIKLGFLYWPDLTDFEINHLAEALHGAMNCFASHPDEALNTLSLLQASDVCSALSDGPTLLPLEAVRGNVVSMIDRWVTRQPEGAAIDGWDGSMSYKELHEQSSWVARNLLHQGVRLGDRVLVCADRSSRTVATILGIVRAGCVLVLSNPTDPEKRLQWLAKKCNASLVVADPTYEERLATADAHVLSTTSVCAPAAWDYEFPALDEHDLISILFKSGSTGTPKGILMEHGALATSVFLGHGRTLRFSRHTRMLHFASLTFDAALAEIFTTLAHGGCICVPCEEDRLSDVPGCISRFAVNTAMLTPSVGRLLDPGALPTLQTLIMVGEPMSRLDVERFAPVLDLYNGAGPTETSIMVTIAGPMKPTDEPVNLGYAVAGVRLWVTEAENPNRLAPLGAVGELIVEGRLVTSGYLDDQARTQEAFLPTLPWLPSQHALYRTGDLVRYVDDGSLRYMGRKDTQVKLRGQRIELQEVEYHLRKSLQQAQIVVEMVVPAGKMRAQASLVAFVSGLTAADVESSSACNLEGTIPISQIVLPKSAFQALEEVLPRHMIPSVYYALDTIPLSVNGKADRRRLREMGSLLLASSAAHKNNIEGMSKSVKWTPTLELERTLLGLWAATLGLEAETIHGDDSFFELGGDSVSAMKLVATARDKYKLSLSVPQMFRYPTVCQLAAEVGEPAGQSASSASSTTEEGFTFSTPDDSSTNDGVDDDFLQLATAQLAQLAQEKGKKVDIAALLKQLQGGSSSNKTPSVSSSSSSSSSSKRKKNAAKAESLAEAAAPIPVQFSLLDGGADALDKVRAQAVEHCKITHDDIEDIYPATALQEGMMALTARTPGVYTTTLTGDLSEQVDIARLQYAWGKAAEAHPILRTRIILTDNNTAVQVVQRAKGLPWDTYSLREDNVLPDLTSNMTSGSPLLRLAVVHRQSQPRMLLVAIHHALYDGWSMPLLKQAVEDAYHGRDLRPQPFTPFIKHLIAGKPAAQDFWTTHLDNFVGGVFPKLPSIYHQIQPTERRTRSMTLPTAAPKAQYTMATKIQAAWAVTVSRYVEANDIVFGTVSTGRSAPVPAIDRMVGPTVTTVPVRISLGGQADRVLSLLQRVQEDSWNKLDHEHLGLQHIRRLGESAAAACNFQTLLVIQPREQPDTKYRSTLLSGLQDVAELEGVDTYPLMLVCEPDGASLNLTAVFDRAVLDGATLDRMLAHWELVLTQMWNEPNMAVIDIDAVSCSDKETLMRWNTGETITEGCAHNAVCEWSRRTPHAPAVCAWDGEWTYKELERYSSLIASQISAHGLSSGDFVALYHEKSRWTAAGILAVFKAGAILITLDPAHPTDRIKDILDQARPRLILTSQSLLDVARNLDTPVLSVQFAASQPLPEEWSSLPTICPTLAAYAPFTSGSTGRPKGIPLDHRGLAASTASIARSCLLRPASRVLHFASFAFDASMMEHLIAWHAGGCLCIPDETARQTDLAKCIRDFNVTWAFLTPSCLRLITPDDVPSLQALGLGGESMTSEDITIWSPRLRQIVQLYGPAECCIVAALTEVTKPSENRLIGRPNACRCWVVDPQNPDRLAPIGAVGELLIEGITVGRGYINDPDRTTPAFIRPPKWLQTLYPDDQEPKRLYRTGDLVRYAGVDGKLAFIGRRDGQLKLHGQRIELADVEAHLRSLIPGMQKMVVEMVHSADNQNPFLAAFLEEISTSQKPKEREIGLLHPSQSQCALDVKAIDSALSRTVPQYMIPSMYLHISRLPLSASGKLDRRHLREMVAELPRQSLNEYAAGSGLGVPDRPVTSQEHEMQAIWARVLSLDPNTFGVNDDFFRIGGDSISGMQVSTKCNAAGIHITSADLFRHRTIEQLICHLNTIRTTDSASVLLPTEPVNEWVALAPIQHLFFEVAPEGPNHFNQSLLLRTSRRVSVEELAGGLDVLIGRHSMLRARFCRKDSGQWFQQVKSLDSEPASAFYRLAAHNHITRESLPTLFTAAQMALSIEDGPLLTVDLVELEDGSQLVYLAAHHLIIDLVSWRILHGDLEEYLQTGSLSSATGSVPFLTWTQLQAEYSAEHLTPARALPGFQEANDDFDFMRYWGISSESNTFGQTSTSRFALDRTVTDILFGSANKVMDTRPVEILEAALWYSCNQALPDHPGPSIYVEGHGREPWTDSIDVSGTVGWFTIMSPLVSTPWHHLSRKSMRDFVDVLSYIKDQRRRIPANGWAYFTSRYLNDEGRVAYGRTKPVMEVLFNYMGQYQEMKREDAILQLAGDDIQSGTGASDIAGNVPRFSLIDVTAFTANGCLTFEFTFPQLIQQDARLEQCIKECEHTLVAAASSLSAEGPRKTLTDFPLMSALTYDQLSQCLNHTLPSMGLRAQDVWNIYPCSPVQRGMLLAQLRDRQAYQQRFKFQVMSRGPTEQLSLEKVKDAWTEVINRHDILRTLLLPVSDHSHFDQVVMVPGSLQHLVRGDAMDANPTEGLPHTINITSDSTGAIICEWNVSHALVDAMSIAFIQREVNQALEGSLGQHQNLPQYVEYIKWLTLQDNTEAQAYWQNHLNGVEPCLFPKLTSSPDKVNPEATISAIRATWSRDVRMDELCHKHAITLTNLFHIVWAIVLGAYVGTDEVCFGYTALGRDVPVHRVETLVGPLVNVLATTVRHQEDETILNALLTHQAHLTNSLQHQHYALADVYASLGLVGSQLFNTIVSLQDTSHFDAPDEQRTRLEMLPANDVSEYDVALNIGVDKSTIQLVCSYQTVSLSAEQADALLRTAFHVLDEILRDPTQRFCELEVISPKCKEHLVKWNAGMLAPTHEYIHEKIQGQCRIHNSRQAVCAWDGMFTYAEVDDLSSRLAARLIRMGVTSEDIIPIYSPKSRWMVIAILGVLKAGAAFTLLEISHPMARLRVICNQIKAPMLIAPASHAVPAANLAPILVVLDNITSLAEERPVSLPAVDIPPAREALAYLIFTSGSTGNPKGVMVTHQNLCSNASIITTSVNMTSDSRVLQFASHAFDGCLWEILGALLAGACLIIPSESENKEDLTGCIERMGVTWAFLTPSVARILKPETLPSLCNLVLGGEPIAASDLEMWRGHVQVVCAYGPTETTILASTTSPSTFPRDGKDIGTPTSSSLWIVDTRNYQTLVPLGATGELLIEGPNVSQGYLGDPEKTNNAFPDAPRWLSQLRKSPTRLYRTGDLVRFDTSTGTIRFVGRKDNQIKFHGQRIELGEIEYHAQFAFSSASTVIVDLITPEQPRQPYIVAFVHQLDAANETTDTNDTLLLPSSEVFRADALAAQNKMHKRLPHYMVPAVFLPLHRLPLSVTGKADRKRLRQCALALSSPELSAYRATASTKRMPSTAAERKMQELVATVLGRDPTEIGMDDSFFYLGGDSVQAMRLVAEGRQQGLTLSLRAIFDSPCLGDLSDQAKSLIEDNQRASTASRGNLRYDCDRIDKIVVTNSLNKADVVDVLPTTSFQRHWLDAQLKSYIVVDIPGPIDPARLLRAMHRVVEAHPILRVSFVPYETTTVQVILRTAVAITNVDLSTATVEELCRRDVDAQMAPGVPYLRVIIATQDKAGHKLIMRLSHAQYDAVSLSLLMNDLSHAYANDTHPLPSSHFPRFNDYITYQQAQRADPTATTFWRHLLQDVPLTHLNLQPAESSASNGTPITLSRDIDIAVFPSLPSDITIATMVKAAWSLALAQKTNSLAVIFGQVVHGRAIALPGVEGIVGPCANITPVVARLGLETTGLELMQALQDQHHSAMSYESVDLDDALAYANDSQAGRKGLQTIVQHQNNVMVDDMELSLGEVKCGVDFRAVDHLPKEVWVYSSVDEKRPGMLEVKIMSSTLVLGEEFAEELMGLLVEKIVGLLRHPESVCV.

Positions 225–616 (ERHAANRPHS…CGRADTQVKL (392 aa)) are adenylation 1. The 74-residue stretch at 757-830 (SRLEQKIQLA…EAASLAEVQE (74 aa)) folds into the Carrier 1 domain. At Ser791 the chain carries O-(pantetheine 4'-phosphoryl)serine. Positions 868 to 1299 (EDVFPCTTMQ…ALNTLSLLQA (432 aa)) are condensation 1. The segment at 1327–1716 (DRWVTRQPEG…GRKDTQVKLR (390 aa)) is adenylation 2. The Carrier 2 domain occupies 1854-1931 (TPTLELERTL…QLAAEVGEPA (78 aa)). At Ser1891 the chain carries O-(pantetheine 4'-phosphoryl)serine. 2 disordered regions span residues 1932–1961 (GQSA…DGVD) and 1994–2020 (GGSS…KKNA). Composition is skewed to low complexity over residues 1934–1958 (SASS…STND) and 1996–2013 (SSSN…SSSS). Residues 2066–2481 (EDIYPATALQ…AVSCSDKETL (416 aa)) form a condensation 2 region. The segment at 2504-2896 (RRTPHAPAVC…IGRRDGQLKL (393 aa)) is adenylation 3. Residues 3032-3108 (RPVTSQEHEM…QLICHLNTIR (77 aa)) enclose the Carrier 3 domain. Ser3069 carries the post-translational modification O-(pantetheine 4'-phosphoryl)serine. Condensation regions lie at residues 3125-3590 (WVAL…TYDQ) and 3611-4030 (NIYP…EHLV). Residues 4055-4445 (HNSRQAVCAW…VGRKDNQIKF (391 aa)) are adenylation 4. One can recognise a Carrier 4 domain in the interval 4579–4655 (MPSTAAERKM…DLSDQAKSLI (77 aa)). Residue Ser4616 is modified to O-(pantetheine 4'-phosphoryl)serine. The tract at residues 4712 to 5097 (IVVDIPGPID…KIVGLLRHPE (386 aa)) is condensation 5.

The protein belongs to the NRP synthetase family.

It participates in secondary metabolite biosynthesis. In terms of biological role, nonribosomal peptide synthetase; part of the gene cluster that mediates the biosynthesis of malformins, cyclic pentapeptides with a disulfide bond between 2 consecutive cysteins, that show potential anti-tumor as well as antimalarial and antitrypanosomal properties. The nonribosomal peptide synthetase mlfA is responsible of the formation of the cyclic pentapeptide. The malformin biosynthesis clusters in malformin-producing fungi also contain enzymes involved in the formation of the disulfide bond between the two consecutive cysteins within malformins, in addition to additional tailoring enzymes such as methyltransferases or oxidoreductases. They are also composed of up to 4 major facilitator superfamily transporters, and transcription factors probably involved in the regulation of the expression of those clusters. In Aspergillus kawachii (strain NBRC 4308) (White koji mold), this protein is Malformin synthetase mlfA.